Reading from the N-terminus, the 144-residue chain is Ethylene-responsive transcription factor ERF019 (144 aa).

The AP2/ERF DNA-binding region spans 13–72 (KYKGIRRRKWGKWVSEIRVPGTRDRLWLGSFSTAEGAAVAHDVAFFCLHQPDSLESLNFP).

The protein belongs to the AP2/ERF transcription factor family. ERF subfamily.

The protein resides in the nucleus. Functionally, probably acts as a transcriptional activator. Binds to the GCC-box pathogenesis-related promoter element. May be involved in the regulation of gene expression by stress factors and by components of stress signal transduction pathways. This Arabidopsis thaliana (Mouse-ear cress) protein is Ethylene-responsive transcription factor ERF019 (ERF019).